The primary structure comprises 722 residues: Polyribonucleotide nucleotidyltransferase (722 aa).

2 residues coordinate Mg(2+): D487 and D493. The region spanning 554 to 613 (PRMVSFKIHPDKIREVIGKGGATIQALTKETGCSIDIKDDGTVTIASTSAEGMAEAKARI) is the KH domain. An S1 motif domain is found at 623–691 (GKIYEGPVVK…ERGRLRLSLK (69 aa)).

Belongs to the polyribonucleotide nucleotidyltransferase family. Mg(2+) is required as a cofactor.

The protein resides in the cytoplasm. The enzyme catalyses RNA(n+1) + phosphate = RNA(n) + a ribonucleoside 5'-diphosphate. Involved in mRNA degradation. Catalyzes the phosphorolysis of single-stranded polyribonucleotides processively in the 3'- to 5'-direction. This chain is Polyribonucleotide nucleotidyltransferase, found in Polynucleobacter asymbioticus (strain DSM 18221 / CIP 109841 / QLW-P1DMWA-1) (Polynucleobacter necessarius subsp. asymbioticus).